The sequence spans 518 residues: Mitochondrial distribution and morphology protein 34 (518 aa).

Residues 1–198 enclose the SMP-LTD domain; that stretch reads MSFKVNWNTL…LPTLIHRLSL (198 aa). Disordered regions lie at residues 335–369 and 491–518; these read SRPKRRVIKLGSKKSSVKSTPSAETLASPIPSEMS and IPDVKSHPGTGRKLDTGFEMPPPPPYQV. A compositionally biased stretch (basic residues) spans 336-350; sequence RPKRRVIKLGSKKSS. Basic and acidic residues predominate over residues 492–506; the sequence is PDVKSHPGTGRKLDT.

It belongs to the MDM34 family. As to quaternary structure, component of the ER-mitochondria encounter structure (ERMES) or MDM complex, composed of MMM1, MDM10, MDM12 and MDM34.

Its subcellular location is the mitochondrion outer membrane. Functionally, component of the ERMES/MDM complex, which serves as a molecular tether to connect the endoplasmic reticulum (ER) and mitochondria. Components of this complex are involved in the control of mitochondrial shape and protein biogenesis, and function in nonvesicular lipid trafficking between the ER and mitochondria. MDM34 is required for the interaction of the ER-resident membrane protein MMM1 and the outer mitochondrial membrane-resident beta-barrel protein MDM10. The protein is Mitochondrial distribution and morphology protein 34 of Meyerozyma guilliermondii (strain ATCC 6260 / CBS 566 / DSM 6381 / JCM 1539 / NBRC 10279 / NRRL Y-324) (Yeast).